We begin with the raw amino-acid sequence, 914 residues long: Polyribonucleotide nucleotidyltransferase (914 aa).

A disordered region spans residues tyrosine 407–proline 427. Residues aspartate 521 and aspartate 527 each contribute to the Mg(2+) site. A KH domain is found at proline 587 to isoleucine 646. An S1 motif domain is found at glycine 658–proline 730. Residues leucine 727 to aspartate 914 are disordered. Basic and acidic residues-rich tracts occupy residues serine 742–aspartate 789, aspartate 797–glycine 865, and arginine 873–glutamate 899.

The protein belongs to the polyribonucleotide nucleotidyltransferase family. It depends on Mg(2+) as a cofactor.

It localises to the cytoplasm. The catalysed reaction is RNA(n+1) + phosphate = RNA(n) + a ribonucleoside 5'-diphosphate. Its function is as follows. Involved in mRNA degradation. Catalyzes the phosphorolysis of single-stranded polyribonucleotides processively in the 3'- to 5'-direction. This is Polyribonucleotide nucleotidyltransferase from Bifidobacterium longum subsp. infantis (strain ATCC 15697 / DSM 20088 / JCM 1222 / NCTC 11817 / S12).